A 438-amino-acid chain; its full sequence is 3-phosphoshikimate 1-carboxyvinyltransferase (438 aa).

Positions 28, 29, and 33 each coordinate 3-phosphoshikimate. Position 28 (K28) interacts with phosphoenolpyruvate. Residues G97 and R125 each contribute to the phosphoenolpyruvate site. S168, S169, Q170, E316, and H343 together coordinate 3-phosphoshikimate. Q170 contacts phosphoenolpyruvate. The active-site Proton acceptor is E316. Phosphoenolpyruvate is bound by residues R347, R388, and K413.

The protein belongs to the EPSP synthase family. As to quaternary structure, monomer.

It is found in the cytoplasm. It catalyses the reaction 3-phosphoshikimate + phosphoenolpyruvate = 5-O-(1-carboxyvinyl)-3-phosphoshikimate + phosphate. It participates in metabolic intermediate biosynthesis; chorismate biosynthesis; chorismate from D-erythrose 4-phosphate and phosphoenolpyruvate: step 6/7. Its function is as follows. Catalyzes the transfer of the enolpyruvyl moiety of phosphoenolpyruvate (PEP) to the 5-hydroxyl of shikimate-3-phosphate (S3P) to produce enolpyruvyl shikimate-3-phosphate and inorganic phosphate. This is 3-phosphoshikimate 1-carboxyvinyltransferase from Rhodococcus jostii (strain RHA1).